The primary structure comprises 412 residues: MKIYLVGGAVRDALLGLPVKDRDWVVVGSTPQEMLDAGYQQVGRDFPVFLHPQTHEEYALARTERKSGSGYTGFTCYAAPDVTLEDDLKRRDLTINALAQDDNGEIIDPYNGLGDLQNRLLRHVSPAFGEDPLRVLRVARFAARYAHLCFRIADETLALMREMTHAGELEHLTPERVWKETENALTTRNPQVFFQVLRDCGALRVLFPEIDALFGVPAPARWHPEIDTGIHTLMTLSMAAMLSPQVDVRFATLCHDLGKGLTPPELWPRHHGHGPAGVKLVEQLCQRLRVPNEIRDLARLVAEFHDLIHTFPMLNPKTIVKLFDSIDAWRKPQRVEQLALTSEADVRGRTGFESADYPQGRWLREAWEVAQSVPTKAVVEAGFKGVEIREELTRRRIAAVAGWKEQRCPKPE.

ATP is bound by residues Gly-8 and Arg-11. The CTP site is built by Gly-8 and Arg-11. Residues Asp-21 and Asp-23 each coordinate Mg(2+). Residues Arg-91, Arg-137, and Arg-140 each coordinate ATP. CTP contacts are provided by Arg-91, Arg-137, and Arg-140. Residues 228–329 (TGIHTLMTLS…VKLFDSIDAW (102 aa)) enclose the HD domain.

This sequence belongs to the tRNA nucleotidyltransferase/poly(A) polymerase family. Bacterial CCA-adding enzyme type 1 subfamily. In terms of assembly, monomer. Can also form homodimers and oligomers. Requires Mg(2+) as cofactor. Ni(2+) is required as a cofactor.

The catalysed reaction is a tRNA precursor + 2 CTP + ATP = a tRNA with a 3' CCA end + 3 diphosphate. It carries out the reaction a tRNA with a 3' CCA end + 2 CTP + ATP = a tRNA with a 3' CCACCA end + 3 diphosphate. Its function is as follows. Catalyzes the addition and repair of the essential 3'-terminal CCA sequence in tRNAs without using a nucleic acid template. Adds these three nucleotides in the order of C, C, and A to the tRNA nucleotide-73, using CTP and ATP as substrates and producing inorganic pyrophosphate. tRNA 3'-terminal CCA addition is required both for tRNA processing and repair. Also involved in tRNA surveillance by mediating tandem CCA addition to generate a CCACCA at the 3' terminus of unstable tRNAs. While stable tRNAs receive only 3'-terminal CCA, unstable tRNAs are marked with CCACCA and rapidly degraded. The sequence is that of Multifunctional CCA protein from Escherichia coli O1:K1 / APEC.